We begin with the raw amino-acid sequence, 471 residues long: Putative multidrug resistance protein MdtD (471 aa).

At 1-11 (MTDLPDSTRWQ) the chain is on the periplasmic side. The helical transmembrane segment at 12–32 (LWIVAFGFFMQSLDTTIVNTA) threads the bilayer. The Cytoplasmic portion of the chain corresponds to 33–48 (LPSMAQSLGESPLHMH). A helical membrane pass occupies residues 49–69 (MVIVSYVLTVAVMLPASGWLA). Topologically, residues 70–76 (DKVGVRN) are periplasmic. A helical membrane pass occupies residues 77-97 (IFFTAIVLFTLGSLFCALSGT). At 98-101 (LNEL) the chain is on the cytoplasmic side. The chain crosses the membrane as a helical span at residues 102 to 124 (LLARALQGVGGAMMVPVGRLTVM). The Periplasmic portion of the chain corresponds to 125 to 137 (KIVPREQYMAAMT). A helical transmembrane segment spans residues 138–158 (FVTLPGQVGPLLGPALGGLLV). At 159–164 (EYASWH) the chain is on the cytoplasmic side. The chain crosses the membrane as a helical span at residues 165-185 (WIFLINIPVGIIGAIATLLLM). The Periplasmic segment spans residues 186–196 (PNYTMQTRRFD). A helical transmembrane segment spans residues 197-217 (LSGFLLLAVGMAVLTLALDGS). Topologically, residues 218-224 (KGTGLSP) are cytoplasmic. The chain crosses the membrane as a helical span at residues 225-245 (LTIAGLVAVGVVALVLYLLHA). The Periplasmic portion of the chain corresponds to 246-262 (RNNNRALFSLKLFRTRT). Residues 263-283 (FSLGLAGSFAGRIGSGMLPFM) form a helical membrane-spanning segment. The Cytoplasmic portion of the chain corresponds to 284 to 285 (TP). The helical transmembrane segment at 286–306 (VFLQIGLGFSPFHAGLMMIPM) threads the bilayer. Residues 307–341 (VLGSMGMKRIVVQVVNRFGYRRVLVATTLGLSLVT) are Periplasmic-facing. Residues 342–362 (LLFMTTALLGWYYVLPFVLFL) traverse the membrane as a helical segment. The Cytoplasmic portion of the chain corresponds to 363 to 395 (QGMVNSTRFSSMNTLTLKDLPDNLASSGNSLLS). A helical transmembrane segment spans residues 396–416 (MIMQLSMSIGVTIAGLLLGLF). Topologically, residues 417–430 (GSQHVSVDSGTTQT) are periplasmic. A helical membrane pass occupies residues 431 to 451 (VFMYTWLSMALIIALPAFIFA). The Cytoplasmic portion of the chain corresponds to 452 to 471 (RVPNDTHQNVAISRRKRSAQ).

The protein belongs to the major facilitator superfamily. TCR/Tet family.

It localises to the cell inner membrane. This chain is Putative multidrug resistance protein MdtD, found in Escherichia coli (strain K12 / MC4100 / BW2952).